We begin with the raw amino-acid sequence, 311 residues long: Methionyl-tRNA formyltransferase (311 aa).

A (6S)-5,6,7,8-tetrahydrofolate-binding site is contributed by 108–111; that stretch reads SILP.

It belongs to the Fmt family.

The catalysed reaction is L-methionyl-tRNA(fMet) + (6R)-10-formyltetrahydrofolate = N-formyl-L-methionyl-tRNA(fMet) + (6S)-5,6,7,8-tetrahydrofolate + H(+). In terms of biological role, attaches a formyl group to the free amino group of methionyl-tRNA(fMet). The formyl group appears to play a dual role in the initiator identity of N-formylmethionyl-tRNA by promoting its recognition by IF2 and preventing the misappropriation of this tRNA by the elongation apparatus. The polypeptide is Methionyl-tRNA formyltransferase (Sorangium cellulosum (strain So ce56) (Polyangium cellulosum (strain So ce56))).